Here is a 101-residue protein sequence, read N- to C-terminus: Small ribosomal subunit protein uS10 (101 aa).

Belongs to the universal ribosomal protein uS10 family. Part of the 30S ribosomal subunit.

In terms of biological role, involved in the binding of tRNA to the ribosomes. The sequence is that of Small ribosomal subunit protein uS10 from Mycobacterium leprae (strain Br4923).